An 847-amino-acid chain; its full sequence is Aryl hydrocarbon receptor (847 aa).

The interval 1–39 (MNGGGANITYASRKRRKPVQKTVKPIPAEGIKSNPSKRH) is disordered. Short sequence motifs (nuclear localization signal) lie at residues 13 to 16 (RKRR) and 37 to 42 (KRHRDR). The region spanning 27-80 (PAEGIKSNPSKRHRDRLNTELDRLASLLPFPQDVINKLDKLSVLRLSVSYLRAK) is the bHLH domain. Positions 38 to 66 (RHRDRLNTELDRLASLLPFPQDVINKLDK) are DNA-binding. Required for maintaining the overall integrity of the AHR:ARNT heterodimer and its transcriptional activity stretches follow at residues 50–82 (LASLLPFPQDVINKLDKLSVLRLSVSYLRAKSF), 117–125 (LLQALNGFV), and 264–266 (FAI). The short motif at 64–72 (LDKLSVLRL) is the Nuclear export signal element. Residues 120 to 173 (ALNGFVLVVTVDALVFYASSTIQDYLGFQQSDVIHQSVYELIHTEDRAEFQRQL) form the PAS 1 domain. The PAS 2 domain maps to 281 to 336 (KNFIFRTKHKLDFTPTGCDAKGQIVLGYTEAELCMRGSGYQFIHAADMLYCAESHI). The region spanning 346-384 (LAVFRLLTKDNRWAWVQSNARFIYKNGRPDFIIATQRPL) is the PAC domain. Disordered regions lie at residues 430–452 (KSGTCGKDSATKPTPSKDSVHPS) and 825–847 (HLPPLHHPSEARPFPDLASGRLL). Polar residues predominate over residues 440–452 (TKPTPSKDSVHPS).

As to quaternary structure, homodimer. Heterodimer; efficient DNA binding requires dimerization with another bHLH protein. Binds MYBBP1A. Interacts with coactivators including SRC-1, RIP140 and NOCA7, and with the corepressor SMRT. Interacts with NEDD8 and IVNS1ABP. Interacts with BMAL1. Interacts with HSP90AB1. Interacts with ARNT; the heterodimer ARNT:AHR binds to core DNA sequence 5'-TGCGTG-3' within the dioxin response element (DRE) of target gene promoters and activates their transcription. Interacts with TIPARP; leading to mono-ADP-ribosylation of AHR and subsequent inhibition of AHR. Post-translationally, mono-ADP-ribosylated, leading to inhibit transcription activator activity of AHR.

The protein resides in the cytoplasm. It is found in the nucleus. Its function is as follows. Ligand-activated transcription factor that enables cells to adapt to changing conditions by sensing compounds from the environment, diet, microbiome and cellular metabolism, and which plays important roles in development, immunity and cancer. Upon ligand binding, translocates into the nucleus, where it heterodimerizes with ARNT and induces transcription by binding to xenobiotic response elements (XRE). Regulates a variety of biological processes, including angiogenesis, hematopoiesis, drug and lipid metabolism, cell motility and immune modulation. Xenobiotics can act as ligands: upon xenobiotic-binding, activates the expression of multiple phase I and II xenobiotic chemical metabolizing enzyme genes (such as the CYP1A1 gene). Mediates biochemical and toxic effects of halogenated aromatic hydrocarbons. Next to xenobiotics, natural ligands derived from plants, microbiota, and endogenous metabolism are potent AHR agonists. Tryptophan (Trp) derivatives constitute an important class of endogenous AHR ligands. Acts as a negative regulator of anti-tumor immunity: indoles and kynurenic acid generated by Trp catabolism act as ligand and activate AHR, thereby promoting AHR-driven cancer cell motility and suppressing adaptive immunity. Regulates the circadian clock by inhibiting the basal and circadian expression of the core circadian component PER1. Inhibits PER1 by repressing the CLOCK-BMAL1 heterodimer mediated transcriptional activation of PER1. The heterodimer ARNT:AHR binds to core DNA sequence 5'-TGCGTG-3' within the dioxin response element (DRE) of target gene promoters and activates their transcription. This Oryctolagus cuniculus (Rabbit) protein is Aryl hydrocarbon receptor (AHR).